A 238-amino-acid polypeptide reads, in one-letter code: Probable rhamnogalacturonate lyase B (238 aa).

The signal sequence occupies residues 1–19 (MRLRTSLGVASACASVASA). Residues Asn-27, Asn-110, and Asn-143 are each glycosylated (N-linked (GlcNAc...) asparagine).

Belongs to the polysaccharide lyase 4 family.

Its subcellular location is the secreted. It catalyses the reaction Endotype eliminative cleavage of L-alpha-rhamnopyranosyl-(1-&gt;4)-alpha-D-galactopyranosyluronic acid bonds of rhamnogalacturonan I domains in ramified hairy regions of pectin leaving L-rhamnopyranose at the reducing end and 4-deoxy-4,5-unsaturated D-galactopyranosyluronic acid at the non-reducing end.. Its function is as follows. Pectinolytic enzymes consist of four classes of enzymes: pectin lyase, polygalacturonase, pectin methylesterase and rhamnogalacturonase. Degrades the rhamnogalacturonan I (RG-I) backbone of pectin. This chain is Probable rhamnogalacturonate lyase B (rglB), found in Aspergillus oryzae (strain ATCC 42149 / RIB 40) (Yellow koji mold).